Consider the following 760-residue polypeptide: Leucine-rich repeat extensin-like protein 3 (760 aa).

The signal sequence occupies residues 1-20 (MKKTIQILLFFFFLINLTNA). Asn-16 carries N-linked (GlcNAc...) asparagine glycosylation. The stretch at 21 to 45 (LSISSDGGVLSDNEVRHIQRRQLLE) is one LRR 1 repeat. Residues Asn-86 and Asn-98 are each glycosylated (N-linked (GlcNAc...) asparagine). LRR repeat units lie at residues 113 to 137 (IRTV…LGLL), 138 to 160 (SDLA…RFNR), 161 to 185 (LKLL…VLQL), 186 to 209 (PSLK…LFSK), 211 to 232 (LDAI…FGDS), 234 to 255 (VSVI…LVEM), 256 to 279 (KNLN…IGRL), 281 to 303 (NVTV…VGEM), and 304 to 327 (VSVE…ICQL). Asn-281 carries an N-linked (GlcNAc...) asparagine glycan. Asn-332 carries an N-linked (GlcNAc...) asparagine glycan. Disordered stretches follow at residues 389–502 (GRSV…PPPP), 515–610 (PPVY…YSPP), and 663–748 (PPPP…PVIG). Pro residues-rich tracts occupy residues 394 to 415 (PRPP…PPAP) and 423 to 502 (LTSP…PPPP). Positions 409–758 (SPPPPAPIFS…VSYASPPPPP (350 aa)) are contains the Ser-Pro(4) repeats. Residues 663–745 (PPPPVHYSSP…SPEYEGPLPP (83 aa)) show a composition bias toward pro residues.

Interacts with SH3P1. In terms of processing, hydroxylated on proline residues in the S-P-P-P-P repeat. O-glycosylated on hydroxyprolines. In terms of tissue distribution, expressed in roots, stems, leaves and flowers, mostly in vascular tissues.

It localises to the secreted. The protein localises to the cell wall. Functionally, modulates cell morphogenesis by regulating cell wall formation and assembly, and/or growth polarization. The chain is Leucine-rich repeat extensin-like protein 3 (LRX3) from Arabidopsis thaliana (Mouse-ear cress).